The sequence spans 447 residues: tRNA modification GTPase MnmE (447 aa).

(6S)-5-formyl-5,6,7,8-tetrahydrofolate is bound by residues Arg-22, Glu-81, and Lys-121. The TrmE-type G domain maps to 217 to 373 (GIVLAITGET…LMSEIVSYAE (157 aa)). Asn-227 provides a ligand contact to K(+). GTP is bound by residues 227 to 232 (NTGKSS), 246 to 252 (SDIPGTT), and 271 to 274 (DTAG). Ser-231 provides a ligand contact to Mg(2+). Positions 246, 248, and 251 each coordinate K(+). Thr-252 is a binding site for Mg(2+). A (6S)-5-formyl-5,6,7,8-tetrahydrofolate-binding site is contributed by Lys-447.

Belongs to the TRAFAC class TrmE-Era-EngA-EngB-Septin-like GTPase superfamily. TrmE GTPase family. Homodimer. Heterotetramer of two MnmE and two MnmG subunits. K(+) serves as cofactor.

Its subcellular location is the cytoplasm. Functionally, exhibits a very high intrinsic GTPase hydrolysis rate. Involved in the addition of a carboxymethylaminomethyl (cmnm) group at the wobble position (U34) of certain tRNAs, forming tRNA-cmnm(5)s(2)U34. This Orientia tsutsugamushi (strain Boryong) (Rickettsia tsutsugamushi) protein is tRNA modification GTPase MnmE.